A 123-amino-acid chain; its full sequence is Snaclec GPIB-binding protein subunit beta (123 aa).

Disulfide bonds link Cys-2-Cys-13, Cys-30-Cys-119, and Cys-96-Cys-111. The C-type lectin domain maps to 9–120 (YGGHCYKLFK…CTRLQYFVCE (112 aa)).

It belongs to the snaclec family. As to quaternary structure, heterodimer of subunits alpha and beta; disulfide-linked. In terms of tissue distribution, expressed by the venom gland.

It localises to the secreted. Functionally, binds to platelet GPIb (subunit alpha) (GP1BA) and functions as a receptor blocker for vWF binding to GPIb. The platelet GPIb-binding site resides on the GPIB-BP subunit beta and not on the alpha subunit. At a final concentration of 104 nM totally abolishes vWF-dependent shear-induced platelet aggregation (SIPA) at a high shear stress, but had no effect on SIPA at a low shear stress. The sequence is that of Snaclec GPIB-binding protein subunit beta from Bothrops jararaca (Jararaca).